We begin with the raw amino-acid sequence, 303 residues long: tRNA pseudouridine synthase B (303 aa).

Catalysis depends on aspartate 47, which acts as the Nucleophile.

It belongs to the pseudouridine synthase TruB family. Type 1 subfamily.

The catalysed reaction is uridine(55) in tRNA = pseudouridine(55) in tRNA. Functionally, responsible for synthesis of pseudouridine from uracil-55 in the psi GC loop of transfer RNAs. The polypeptide is tRNA pseudouridine synthase B (Legionella pneumophila (strain Lens)).